Consider the following 360-residue polypeptide: DNA replication and repair protein RecF (360 aa).

Residue 30–37 (GQNGSGKT) coordinates ATP.

Belongs to the RecF family.

The protein resides in the cytoplasm. Its function is as follows. The RecF protein is involved in DNA metabolism; it is required for DNA replication and normal SOS inducibility. RecF binds preferentially to single-stranded, linear DNA. It also seems to bind ATP. The protein is DNA replication and repair protein RecF of Shewanella baltica (strain OS223).